The following is a 557-amino-acid chain: Transcription factor fil1 (557 aa).

A disordered region spans residues 234–258; that stretch reads SPVKRELNDSTSPSKLSESSSSLTG. Positions 243-258 are enriched in low complexity; that stretch reads STSPSKLSESSSSLTG. GATA-type zinc fingers lie at residues 365 to 390 and 419 to 443; these read CFNC…CNAC and CANC…CNAC.

Its subcellular location is the nucleus. It localises to the cytoplasm. Its function is as follows. Activates genes required for amino acid biosynthesis and acts as a master transcriptional regulator during amino acid starvation. Binds variations of the DNA sequence 5'-GAT[AC]GC-3'. The protein is Transcription factor fil1 of Schizosaccharomyces pombe (strain 972 / ATCC 24843) (Fission yeast).